A 436-amino-acid polypeptide reads, in one-letter code: Bifunctional protein GlmU (436 aa).

Positions 1–226 (MNEISIIILA…ETNFMGINDK (226 aa)) are pyrophosphorylase. UDP-N-acetyl-alpha-D-glucosamine-binding positions include 9–12 (LAAG), Lys-23, Gln-75, and 82–83 (GT). Mg(2+) is bound at residue Asp-105. Residues Gly-138, Glu-152, Asn-167, and Asn-224 each coordinate UDP-N-acetyl-alpha-D-glucosamine. Asn-224 contributes to the Mg(2+) binding site. A linker region spans residues 227 to 247 (FALSIAEEIMQNRIKENLMKN). An N-acetyltransferase region spans residues 248–436 (GVIMSLPDTI…YKFFGKNDEK (189 aa)). The UDP-N-acetyl-alpha-D-glucosamine site is built by Arg-311 and Lys-328. The active-site Proton acceptor is the His-339. UDP-N-acetyl-alpha-D-glucosamine is bound by residues Tyr-342 and Asn-353. Acetyl-CoA-binding positions include 362–363 (NY), Ser-381, Ala-399, and Arg-416.

This sequence in the N-terminal section; belongs to the N-acetylglucosamine-1-phosphate uridyltransferase family. It in the C-terminal section; belongs to the transferase hexapeptide repeat family. As to quaternary structure, homotrimer. The cofactor is Mg(2+).

It localises to the cytoplasm. It carries out the reaction alpha-D-glucosamine 1-phosphate + acetyl-CoA = N-acetyl-alpha-D-glucosamine 1-phosphate + CoA + H(+). It catalyses the reaction N-acetyl-alpha-D-glucosamine 1-phosphate + UTP + H(+) = UDP-N-acetyl-alpha-D-glucosamine + diphosphate. The protein operates within nucleotide-sugar biosynthesis; UDP-N-acetyl-alpha-D-glucosamine biosynthesis; N-acetyl-alpha-D-glucosamine 1-phosphate from alpha-D-glucosamine 6-phosphate (route II): step 2/2. It participates in nucleotide-sugar biosynthesis; UDP-N-acetyl-alpha-D-glucosamine biosynthesis; UDP-N-acetyl-alpha-D-glucosamine from N-acetyl-alpha-D-glucosamine 1-phosphate: step 1/1. Its pathway is bacterial outer membrane biogenesis; LPS lipid A biosynthesis. Functionally, catalyzes the last two sequential reactions in the de novo biosynthetic pathway for UDP-N-acetylglucosamine (UDP-GlcNAc). The C-terminal domain catalyzes the transfer of acetyl group from acetyl coenzyme A to glucosamine-1-phosphate (GlcN-1-P) to produce N-acetylglucosamine-1-phosphate (GlcNAc-1-P), which is converted into UDP-GlcNAc by the transfer of uridine 5-monophosphate (from uridine 5-triphosphate), a reaction catalyzed by the N-terminal domain. This chain is Bifunctional protein GlmU, found in Campylobacter fetus subsp. fetus (strain 82-40).